Reading from the N-terminus, the 219-residue chain is Zinc finger C2HC domain-containing protein 1B (219 aa).

2 consecutive C2HC/C3H-type zinc fingers follow at residues 14–43 (ELFP…LFNK) and 117–146 (DYIQ…QESR). Zn(2+) contacts are provided by C18, C21, H33, C37, C121, C124, H136, and C140. Residues 190–219 (EASAAPTRPAVDPASGAKLRQGFAKSSKKD) form a disordered region.

This sequence belongs to the ZC2HC1 family. The cofactor is Zn(2+).

This Bos taurus (Bovine) protein is Zinc finger C2HC domain-containing protein 1B (ZC2HC1B).